Reading from the N-terminus, the 299-residue chain is Palmitoyltransferase ZDHHC3 (299 aa).

Residues 1-47 (MMLIPTHHFRDIERKPEYLQPEKCAPPPFPGPVGTMWFIRDGCGIAC) are Cytoplasmic-facing. Tyr18 is modified (phosphotyrosine). The helical transmembrane segment at 48 to 68 (AIVTWFLVLYAEFVVLFVMLI) threads the bilayer. The Lumenal segment spans residues 69-72 (PSRD). A helical transmembrane segment spans residues 73-93 (YAYSIINGIVFNLLAFLALAS). Topologically, residues 94-171 (HCRAMLTDPG…NCVGENNQKY (78 aa)) are cytoplasmic. Positions 128 to 254 (KCPKCCSIKP…DETGIEQLKK (127 aa)) constitute a DHHC domain. Cys146 carries the S-palmitoyl cysteine lipid modification. Residue Cys157 is the S-palmitoyl cysteine intermediate of the active site. The helical transmembrane segment at 172 to 192 (FVLFTMYIALISLHALIMVGF) threads the bilayer. The Lumenal portion of the chain corresponds to 193 to 214 (HFLHCFEEDWTKCSSFSPPTTV). A helical membrane pass occupies residues 215–235 (ILLILLCFEALLFLIFTSVMF). Residues 236–299 (GTQVHSICTD…GKADPYQYVV (64 aa)) lie on the Cytoplasmic side of the membrane.

Belongs to the DHHC palmitoyltransferase family. As to quaternary structure, monomer. Homooligomers. The monomeric form has a higher catalytic activity. Forms heterooligomers with ZDHHC7. Interacts with TNFRSF10A. In terms of processing, phosphorylation by FGFR1 and SRC probably regulates the palmitoyltransferase activity. Post-translationally, autopalmitoylated.

The protein localises to the golgi apparatus membrane. The enzyme catalyses L-cysteinyl-[protein] + hexadecanoyl-CoA = S-hexadecanoyl-L-cysteinyl-[protein] + CoA. It carries out the reaction L-cysteinyl-[protein] + tetradecanoyl-CoA = S-tetradecanoyl-L-cysteinyl-[protein] + CoA. It catalyses the reaction L-cysteinyl-[protein] + octadecanoyl-CoA = S-octadecanoyl-L-cysteinyl-[protein] + CoA. Its function is as follows. Golgi-localized palmitoyltransferase that catalyzes the addition of palmitate onto various protein substrates. Has no stringent fatty acid selectivity and in addition to palmitate can also transfer onto target proteins myristate from tetradecanoyl-CoA and stearate from octadecanoyl-CoA. Plays an important role in G protein-coupled receptor signaling pathways involving GNAQ and potentially other heterotrimeric G proteins by regulating their dynamic association with the plasma membrane. Palmitoylates ITGA6 and ITGB4, thereby regulating the alpha-6/beta-4 integrin localization, expression and function in cell adhesion to laminin. Plays a role in the TRAIL-activated apoptotic signaling pathway most probably through the palmitoylation and localization to the plasma membrane of TNFRSF10A. In the brain, by palmitoylating the gamma subunit GABRG2 of GABA(A) receptors and regulating their postsynaptic accumulation, plays a role in synaptic GABAergic inhibitory function and GABAergic innervation. Palmitoylates the neuronal protein GAP43 which is also involved in the formation of GABAergic synapses. Palmitoylates NCDN thereby regulating its association with endosome membranes. Probably palmitoylates PRCD and is involved in its proper localization within the photoreceptor. Could mediate the palmitoylation of NCAM1 and regulate neurite outgrowth. Could palmitoylate DNAJC5 and regulate its localization to Golgi membranes. Also constitutively palmitoylates DLG4. May also palmitoylate SNAP25. Could palmitoylate the glutamate receptors GRIA1 and GRIA2 but this has not been confirmed in vivo. Could also palmitoylate the D(2) dopamine receptor DRD2. May also palmitoylate LAMTOR1, promoting its localization to lysosomal membranes. Palmitoylates the Toll-like receptor 9/TLR9 in the Golgi and thereby regulates TLR9 trafficking to endosomes. May palmitoylate CALHM1 and CALHM3 subunits of gustatory voltage-gated ion channels and modulate channel gating and kinetics. This is Palmitoyltransferase ZDHHC3 from Rattus norvegicus (Rat).